The sequence spans 167 residues: Phosphopantetheine adenylyltransferase (167 aa).

Threonine 9 contributes to the substrate binding site. ATP-binding positions include 9 to 10 and histidine 17; that span reads TF. Positions 41, 73, and 87 each coordinate substrate. ATP-binding positions include 88–90, glutamate 98, and 123–129; these read GLR and YQFISGT.

This sequence belongs to the bacterial CoaD family. In terms of assembly, homohexamer. It depends on Mg(2+) as a cofactor.

The protein resides in the cytoplasm. It catalyses the reaction (R)-4'-phosphopantetheine + ATP + H(+) = 3'-dephospho-CoA + diphosphate. Its pathway is cofactor biosynthesis; coenzyme A biosynthesis; CoA from (R)-pantothenate: step 4/5. Functionally, reversibly transfers an adenylyl group from ATP to 4'-phosphopantetheine, yielding dephospho-CoA (dPCoA) and pyrophosphate. This Bordetella avium (strain 197N) protein is Phosphopantetheine adenylyltransferase.